Reading from the N-terminus, the 189-residue chain is Small ribosomal subunit protein uS5 (189 aa).

The region spanning 22–85 is the S5 DRBM domain; sequence FVDKLVAINR…EAAKRDLIFV (64 aa).

The protein belongs to the universal ribosomal protein uS5 family. In terms of assembly, part of the 30S ribosomal subunit. Contacts proteins S4 and S8.

Functionally, with S4 and S12 plays an important role in translational accuracy. Its function is as follows. Located at the back of the 30S subunit body where it stabilizes the conformation of the head with respect to the body. The chain is Small ribosomal subunit protein uS5 from Sinorhizobium fredii (strain NBRC 101917 / NGR234).